Here is a 176-residue protein sequence, read N- to C-terminus: Glycine-rich RNA-binding protein 7 (176 aa).

A2 is modified (N-acetylalanine). The interval 2 to 41 (ASGDVEYRCFVGGLAWATDDRALETAFAQYGDVIDSKIIN) is required for RNA chaperone activity. An RRM domain is found at 8–86 (YRCFVGGLAW…RSITVNEAQS (79 aa)). R49 bears the ADP-ribosylarginine; by HopU1 mark. Residues 83–103 (EAQSRGSGGGGGHRGGGGGGY) are disordered. The span at 88–103 (GSGGGGGHRGGGGGGY) shows a compositional bias: gly residues. A glycine-rich (GR) required for cell-to-cell movement region spans residues 88–175 (GSGGGGGHRG…GYGGSGGGGG (88 aa)). The segment at 97–148 (GGGGGGYRSGGGGGYSGGGGSYGGGGGRREGGGGYSGGGGGYSSRGGGGGSY) is nuclear targeting sequence (M9). Residues S105 and S117 each carry the phosphoserine modification. The disordered stretch occupies residues 131 to 176 (YSGGGGGYSSRGGGGGSYGGGRREGGGGYGGGEGGGYGGSGGGGGW).

It belongs to the GR-RBP family. As to quaternary structure, interacts with TRN1. Interacts with the Pseudomonas syringae type III effector HopU1. Binds to small phloem-mobile single-stranded RNAs (ss-sRNA, e.g. small interfering RNA (siRNA) and microRNA (miRNA)) in the phloeme exudate, including viral-derived sRNA (vsiRNA). Post-translationally, ADP-ribosylated by the Pseudomonas syringae type III effector HopU1. ADP-ribosylation reduces the ability of the protein to bind RNA. As to expression, ubiquitous with strong expression in guard cell.

It localises to the cytoplasm. The protein resides in the nucleus. The protein localises to the secreted. In terms of biological role, plays a role in RNA transcription or processing during stress. Binds RNAs and DNAs sequence with a preference to single-stranded nucleic acids. Displays strong affinity to poly(U) and poly(G) sequence. Involved in mRNA alternative splicing of numerous targets by modulating splice site selection. Negatively regulates the circadian oscillations of its own transcript as well as RBG8 transcript. Forms an interlocked post-transcriptional negative feedback loop with the RBG8 autoregulatory circuit. Both proteins negatively autoregulate and reciprocally crossregulate by binding to their pre-mRNAs and promoting unproductive splicing coupled to degradation via the NMD pathway. Involved in the regulation of abscisic acid and stress responses. Affects the growth and stress tolerance under high salt and dehydration stress conditions, and also confers freezing tolerance, particularly via the regulation of stomatal opening and closing in the guard cells. Exhibits RNA chaperone activity during the cold adaptation process. Involved in the export of mRNAs from the nucleus to the cytoplasm under cold stress conditions. Target of the Pseudomonas syringae type III effector HopU1, which could probably be involved in plant innate immunity. Component of the flowering autonomous pathway which promotes floral transition, at least partly by down-regulating FLC. Mediates cell-to-cell trafficking of RNA interference (RNAi) signals (small RNAs (sRNA), e.g. small interfering RNA (siRNA) and microRNA (miRNA)) which regulate growth and development, as well as responses to environmental inputs, including pathogen attack; can compromise zucchini yellow mosaic virus (ZYMV) and tobacco rattle virus (TRV) infections at the early stage. The sequence is that of Glycine-rich RNA-binding protein 7 from Arabidopsis thaliana (Mouse-ear cress).